Consider the following 479-residue polypeptide: Transcriptional regulator ERG (479 aa).

Residues 34-47 (TASSSSDYGQTSKM) show a composition bias toward polar residues. 2 disordered regions span residues 34-56 (TASS…QQDW) and 72-92 (PSQV…KGGK). Phosphoserine is present on residues serine 48, serine 81, and serine 96. The 87-residue stretch at 113-199 (MPPPNMTTNE…SHLHYLRETP (87 aa)) folds into the PNT domain. The segment at 242 to 293 (QRITTRPDLPYEPPRRSAWTGHGHPTPQSKAAQPSPSTVPKTEDQRPQLDPY) is disordered. The segment covering 267 to 281 (TPQSKAAQPSPSTVP) has biased composition (polar residues). Lysine 282 participates in a covalent cross-link: Glycyl lysine isopeptide (Lys-Gly) (interchain with G-Cter in SUMO2). The segment at residues 311 to 391 (IQLWQFLLEL…HGKRYAYKFD (81 aa)) is a DNA-binding region (ETS).

It belongs to the ETS family. As to quaternary structure, identified in a IGF2BP1-dependent mRNP granule complex containing untranslated mRNAs. Interacts with SETDB1.

It localises to the nucleus. It is found in the cytoplasm. Functionally, transcriptional regulator. May participate in transcriptional regulation through the recruitment of SETDB1 histone methyltransferase and subsequent modification of local chromatin structure. The sequence is that of Transcriptional regulator ERG (ERG) from Homo sapiens (Human).